Reading from the N-terminus, the 342-residue chain is uncharacterized protein (342 aa).

Transmembrane regions (helical) follow at residues 8–28 (FESS…TSLF), 39–59 (ISFL…MLWI), 79–99 (SSFS…FILI), 108–128 (IFWV…PFYM), 142–162 (GWYI…LIMP), 175–195 (INYF…AVVI), 207–227 (AMAP…VALI), 242–262 (FYIF…MAII), 276–296 (AMSW…THLV), and 304–324 (IVDY…IVTL).

Belongs to the tellurite-resistance/dicarboxylate transporter (TDT) family.

The protein localises to the cell membrane. This is an uncharacterized protein from Methanocaldococcus jannaschii (strain ATCC 43067 / DSM 2661 / JAL-1 / JCM 10045 / NBRC 100440) (Methanococcus jannaschii).